The sequence spans 455 residues: Folate transporter 2 (455 aa).

The next 8 membrane-spanning stretches (helical) occupy residues 42 to 64 (IVVYLVGLSDGLTHLASLAIYYL), 84 to 103 (YIPFILKPVIALITDSFSIF), 110 to 131 (YLFLFSLFQSLNFLALAFLNLS), 137 to 157 (LILFFISLCASFCTTVAEALV), 177 to 195 (IASKAIGSLSVAYFSGYFL), 201 to 221 (EYIFIATSIFPLIISLSCLFL), 242 to 261 (FINTPIFLGPFLYIFVYMSG), and 281 to 301 (SFMGTLRLTYGIASLIGIIIY). Asn307 carries N-linked (GlcNAc...) asparagine glycosylation. 2 helical membrane passes run 313-331 (TLIITTLVSFPIYISPIIL) and 347-367 (VLSGGFLIEAITEIQLLPLFI). Residue Asn416 is glycosylated (N-linked (GlcNAc...) asparagine). A helical membrane pass occupies residues 417–438 (LSLYILTCGFFLLFSLTLVPLL).

It belongs to the major facilitator superfamily. Folate-biopterin transporter (TC 2.A.71) family.

The protein resides in the cell membrane. The enzyme catalyses folate(in) + H(+)(in) = folate(out) + H(+)(out). It carries out the reaction (6S)-5-methyl-5,6,7,8-tetrahydrofolate(in) + H(+)(in) = (6S)-5-methyl-5,6,7,8-tetrahydrofolate(out) + H(+)(out). With respect to regulation, transport of folates is inhibited by probenecid and methotrexate. Functionally, folate transporter with broad substrate specificity. Transports folic acid, folinic acid, pteroic acid, dihydropteroic acid, the folate precursor p-amino benzoic acid (pABA) and the human folate catabolite pABA monoglutamate. Can transport 5-methyltetrahydrofolate with low efficiency. In Plasmodium falciparum (isolate 3D7), this protein is Folate transporter 2.